We begin with the raw amino-acid sequence, 245 residues long: ATP synthase subunit b (245 aa).

Residues 3 to 23 traverse the membrane as a helical segment; it reads SFNLLTIVSSIVNLLALAWII.

It belongs to the ATPase B chain family. In terms of assembly, F-type ATPases have 2 components, F(1) - the catalytic core - and F(0) - the membrane proton channel. F(1) has five subunits: alpha(3), beta(3), gamma(1), delta(1), epsilon(1). F(0) has three main subunits: a(1), b(2) and c(10-14). The alpha and beta chains form an alternating ring which encloses part of the gamma chain. F(1) is attached to F(0) by a central stalk formed by the gamma and epsilon chains, while a peripheral stalk is formed by the delta and b chains.

The protein resides in the cell inner membrane. Functionally, f(1)F(0) ATP synthase produces ATP from ADP in the presence of a proton or sodium gradient. F-type ATPases consist of two structural domains, F(1) containing the extramembraneous catalytic core and F(0) containing the membrane proton channel, linked together by a central stalk and a peripheral stalk. During catalysis, ATP synthesis in the catalytic domain of F(1) is coupled via a rotary mechanism of the central stalk subunits to proton translocation. In terms of biological role, component of the F(0) channel, it forms part of the peripheral stalk, linking F(1) to F(0). The protein is ATP synthase subunit b of Dictyoglomus thermophilum (strain ATCC 35947 / DSM 3960 / H-6-12).